A 167-amino-acid polypeptide reads, in one-letter code: Glutathione peroxidase 1 (167 aa).

Cysteine 41 is a catalytic residue.

Belongs to the glutathione peroxidase family.

It carries out the reaction 2 glutathione + H2O2 = glutathione disulfide + 2 H2O. Its function is as follows. May constitute a glutathione peroxidase-like protective system against oxidative stresses. The sequence is that of Glutathione peroxidase 1 (GPXHA-1) from Helianthus annuus (Common sunflower).